Here is a 343-residue protein sequence, read N- to C-terminus: N-acetyl-gamma-glutamyl-phosphate reductase (343 aa).

Residue cysteine 146 is part of the active site.

It belongs to the NAGSA dehydrogenase family. Type 1 subfamily.

The protein localises to the cytoplasm. It carries out the reaction N-acetyl-L-glutamate 5-semialdehyde + phosphate + NADP(+) = N-acetyl-L-glutamyl 5-phosphate + NADPH + H(+). Its pathway is amino-acid biosynthesis; L-arginine biosynthesis; N(2)-acetyl-L-ornithine from L-glutamate: step 3/4. Catalyzes the NADPH-dependent reduction of N-acetyl-5-glutamyl phosphate to yield N-acetyl-L-glutamate 5-semialdehyde. This chain is N-acetyl-gamma-glutamyl-phosphate reductase, found in Pseudarthrobacter chlorophenolicus (strain ATCC 700700 / DSM 12829 / CIP 107037 / JCM 12360 / KCTC 9906 / NCIMB 13794 / A6) (Arthrobacter chlorophenolicus).